Consider the following 266-residue polypeptide: Pyridoxal phosphate phosphatase YigL (266 aa).

The active-site Nucleophile is the aspartate 8. Aspartate 8 serves as a coordination point for Mg(2+). Position 9 (leucine 9) interacts with phosphate. Residue aspartate 10 participates in Mg(2+) binding. Residues threonine 42–glycine 43 and lysine 191 each bind phosphate. Residue aspartate 214 participates in Mg(2+) binding. A phosphate-binding site is contributed by asparagine 217.

It belongs to the HAD-like hydrolase superfamily. Cof family. It depends on Mg(2+) as a cofactor. Mn(2+) serves as cofactor. The cofactor is Co(2+). Zn(2+) is required as a cofactor.

It carries out the reaction pyridoxal 5'-phosphate + H2O = pyridoxal + phosphate. It catalyses the reaction sugar phosphate + H2O = sugar + phosphate.. Functionally, catalyzes the dephosphorylation of pyridoxal-phosphate (PLP) and sugar phosphate. This chain is Pyridoxal phosphate phosphatase YigL (yigL), found in Escherichia coli O157:H7.